The following is an 840-amino-acid chain: Leucine-zipper-like transcriptional regulator 1 (840 aa).

Ala2 carries the N-acetylalanine modification. Kelch repeat units lie at residues 79–128 (AIYV…VYGS), 130–185 (MFVF…VYSD), 187–238 (LWIF…VCRD), 239–285 (KMFV…QRRY), 295–341 (HLYV…PERA), and 399–450 (AMYI…FVLG). BTB domains lie at 443–537 (CDVE…KYPR) and 667–736 (CDIT…NMPP).

This sequence belongs to the LZTR1 family. In terms of assembly, homodimer. Component of the BCR(LZTR1) E3 ubiquitin ligase complex, at least composed of CUL3, LZTR1 and RBX1. Interacts with Ras (K-Ras/KRAS, N-Ras/NRAS and H-Ras/HRAS). Interacts with RAF1. Interacts with SHOC2. Interacts with PPP1CB. Post-translationally, phosphorylated on tyrosine upon induction of apoptosis, leading to its degradation by the proteasome.

It localises to the endomembrane system. Its subcellular location is the recycling endosome. The protein resides in the golgi apparatus. The protein operates within protein modification; protein ubiquitination. Substrate-specific adapter of a BCR (BTB-CUL3-RBX1) E3 ubiquitin-protein ligase complex that mediates ubiquitination of Ras (K-Ras/KRAS, N-Ras/NRAS and H-Ras/HRAS). Is a negative regulator of RAS-MAPK signaling that acts by controlling Ras levels and decreasing Ras association with membranes. This is Leucine-zipper-like transcriptional regulator 1 from Homo sapiens (Human).